Here is a 524-residue protein sequence, read N- to C-terminus: Methylmalonyl-CoA carboxyltransferase 12S subunit (524 aa).

The 256-residue stretch at methionine 13–asparagine 268 folds into the CoA carboxyltransferase N-terminal domain. The tract at residues methionine 13–methionine 506 is carboxyltransferase. In terms of domain architecture, CoA carboxyltransferase C-terminal spans serine 274–methionine 506.

In terms of assembly, homohexamer. Transcarboxylase is composed of three subunits: 1.3S, 5S, and 12S. The core of the enzyme is composed of six 12S subunits. On each side of the core there are three pairs of 5S subunits. Each 5S dimer is attached to the core by two 1.3S subunits. Thus the total number of chains is 30 (6 + 12 + 12).

It carries out the reaction (S)-methylmalonyl-CoA + pyruvate = propanoyl-CoA + oxaloacetate. The 12S subunit specifically catalyzes the transfer of the carboxyl group of methylmalonyl CoA to the biotin of the 1.3S subunit forming propanoyl-CoA and carboxylated 1.3S-biotin. The chain is Methylmalonyl-CoA carboxyltransferase 12S subunit from Propionibacterium freudenreichii subsp. shermanii.